A 400-amino-acid polypeptide reads, in one-letter code: Subtilisin-like protease 7 (400 aa).

A signal peptide spans 1-20 (MGFITKAIPLALAAASVING). Positions 21 to 119 (AEILETRAGV…IERDARVQIN (99 aa)) are excised as a propeptide. One can recognise an Inhibitor I9 domain in the interval 36-118 (KYIVVMNDGI…YIERDARVQI (83 aa)). Residues 129 to 400 (SWGLARVGSK…SKLINNGSGM (272 aa)) form the Peptidase S8 domain. Catalysis depends on charge relay system residues aspartate 161 and histidine 192. An N-linked (GlcNAc...) asparagine glycan is attached at asparagine 252. The active-site Charge relay system is the serine 346. N-linked (GlcNAc...) asparagine glycosylation is present at asparagine 396.

The protein belongs to the peptidase S8 family.

The protein resides in the secreted. In terms of biological role, secreted subtilisin-like serine protease with keratinolytic activity that contributes to pathogenicity. The protein is Subtilisin-like protease 7 (SUB7) of Trichophyton violaceum.